Here is a 245-residue protein sequence, read N- to C-terminus: Proteasome subunit alpha type-7-1B (245 aa).

The protein belongs to the peptidase T1A family. As to quaternary structure, the 26S proteasome consists of a 20S proteasome core and two 19S regulatory subunits. The 20S proteasome core is composed of 28 subunits that are arranged in four stacked rings, resulting in a barrel-shaped structure. The two end rings are each formed by seven alpha subunits, and the two central rings are each formed by seven beta subunits. The catalytic chamber with the active sites is on the inside of the barrel. As to expression, testis specific.

It is found in the cytoplasm. The protein localises to the nucleus. The proteasome is a multicatalytic proteinase complex which is characterized by its ability to cleave peptides with Arg, Phe, Tyr, Leu, and Glu adjacent to the leaving group at neutral or slightly basic pH. The proteasome has an ATP-dependent proteolytic activity. The sequence is that of Proteasome subunit alpha type-7-1B (Pros28.1B) from Drosophila virilis (Fruit fly).